Reading from the N-terminus, the 251-residue chain is uncharacterized protein (251 aa).

This is an uncharacterized protein from Acanthamoeba polyphaga mimivirus (APMV).